The chain runs to 1142 residues: ABC transporter F family member 4 (1142 aa).

The tract at residues M1–K564 is disordered. 3 stretches are compositionally biased toward low complexity: residues P121 to Q143, P153 to K166, and P182 to K195. Composition is skewed to acidic residues over residues S203–V212 and E233–E244. Basic residues-rich tracts occupy residues K249 to K261 and K280 to S290. Positions E295 to E306 are enriched in acidic residues. The span at N314–E328 shows a compositional bias: basic and acidic residues. A compositionally biased stretch (acidic residues) spans E329–E340. Residues K377–S387 are compositionally biased toward basic residues. Acidic residues-rich tracts occupy residues E392–E404 and E441–E451. A compositionally biased stretch (basic residues) spans S456 to K467. Residues E471–E480 show a composition bias toward acidic residues. Over residues S485–S496 the composition is skewed to basic residues. Positions E501–E518 are enriched in acidic residues. The span at A530–K548 shows a compositional bias: basic residues. ABC transporter domains lie at I604–E857 and L923–V1139. ATP is bound by residues G636–S643 and G956–S963.

This sequence belongs to the ABC transporter superfamily.

The chain is ABC transporter F family member 4 (abcF4) from Dictyostelium discoideum (Social amoeba).